The following is a 411-amino-acid chain: Arginine deiminase (411 aa).

The Amidino-cysteine intermediate role is filled by cysteine 401.

The protein belongs to the arginine deiminase family. Post-translationally, glycosylated.

Its subcellular location is the cytoplasm. The enzyme catalyses L-arginine + H2O = L-citrulline + NH4(+). The protein operates within amino-acid degradation; L-arginine degradation via ADI pathway; carbamoyl phosphate from L-arginine: step 1/2. This is Arginine deiminase (arcA) from Streptococcus pyogenes serotype M1.